Reading from the N-terminus, the 333-residue chain is Adenosine deaminase (333 aa).

H12 and H14 together coordinate Zn(2+). Residues H14, D16, and G170 each contribute to the substrate site. H197 provides a ligand contact to Zn(2+). Residue E200 is the Proton donor of the active site. D278 contacts Zn(2+). D279 is a binding site for substrate.

It belongs to the metallo-dependent hydrolases superfamily. Adenosine and AMP deaminases family. Adenosine deaminase subfamily. Requires Zn(2+) as cofactor.

It carries out the reaction adenosine + H2O + H(+) = inosine + NH4(+). The enzyme catalyses 2'-deoxyadenosine + H2O + H(+) = 2'-deoxyinosine + NH4(+). Catalyzes the hydrolytic deamination of adenosine and 2-deoxyadenosine. This chain is Adenosine deaminase, found in Escherichia coli O139:H28 (strain E24377A / ETEC).